A 485-amino-acid polypeptide reads, in one-letter code: MTITPQNLIALLPLLIVGLTVVVVMLSIAWRRNHFLNATLSVIGLNAALVSLWFVGQAGAMDVTPLMRVDGFAMLYTGLVLLASLATCTFAYPWLEGYNDNKDEFYLLVLIAALGGILLANANHLASLFLGIELISLPLFGLVGYAFRQKRSLEASIKYTILSAAASSFLLFGMALVYAQSGDLSFVALGKNLGDGMLNEPLLLAGFGMMIVGLGFKLSLVPFHLWTPDVYQGAPAPVSTFLATASKIAIFGVVMRLFLYAPVGDSEAIRVVLAIIAFASIIFGNLMALSQTNIKRLLGYSSISHLGYLLVALIALQTGEMSMEAVGGYLAGYLFSSLGAFGVVSLMSSPYRGPDADSLFSYRGLFWHRPILAAVMTVMMLSLAGIPMTLGFIGKFYVLAVGVQAHLWWLVGAVVVGSAIGLYYYLRVAVSLYLHAPEQPGRDAPSNWQYSAGGIVVLISALLVLVLGVWPQPLISIVRLAMPLM.

14 consecutive transmembrane segments (helical) span residues 8 to 28 (LIALLPLLIVGLTVVVVMLSI), 35 to 55 (FLNATLSVIGLNAALVSLWFV), 71 to 91 (GFAMLYTGLVLLASLATCTFA), 105 to 125 (FYLLVLIAALGGILLANANHL), 127 to 147 (SLFLGIELISLPLFGLVGYAF), 159 to 179 (YTILSAAASSFLLFGMALVYA), 203 to 223 (LLAGFGMMIVGLGFKLSLVPF), 235 to 255 (PAPVSTFLATASKIAIFGVVM), 271 to 291 (VVLAIIAFASIIFGNLMALSQ), 297 to 317 (LLGYSSISHLGYLLVALIALQ), 326 to 346 (VGGYLAGYLFSSLGAFGVVSL), 373 to 393 (AAVMTVMMLSLAGIPMTLGFI), 408 to 430 (WWLVGAVVVGSAIGLYYYLRVAV), and 455 to 475 (IVVLISALLVLVLGVWPQPLI).

It belongs to the complex I subunit 2 family. NDH-1 is composed of 13 different subunits. Subunits NuoA, H, J, K, L, M, N constitute the membrane sector of the complex.

It localises to the cell inner membrane. It catalyses the reaction a quinone + NADH + 5 H(+)(in) = a quinol + NAD(+) + 4 H(+)(out). Functionally, NDH-1 shuttles electrons from NADH, via FMN and iron-sulfur (Fe-S) centers, to quinones in the respiratory chain. The immediate electron acceptor for the enzyme in this species is believed to be ubiquinone. Couples the redox reaction to proton translocation (for every two electrons transferred, four hydrogen ions are translocated across the cytoplasmic membrane), and thus conserves the redox energy in a proton gradient. This is NADH-quinone oxidoreductase subunit N from Shigella boydii serotype 18 (strain CDC 3083-94 / BS512).